A 173-amino-acid chain; its full sequence is RNA pyrophosphohydrolase (173 aa).

Positions 13–166 (PYRPCVGLMI…KRKVYEEVVA (154 aa)) constitute a Nudix hydrolase domain. The short motif at 54-75 (GGIDKGEEPLQAAERELYEETG) is the Nudix box element.

It belongs to the Nudix hydrolase family. RppH subfamily. A divalent metal cation serves as cofactor.

Its function is as follows. Accelerates the degradation of transcripts by removing pyrophosphate from the 5'-end of triphosphorylated RNA, leading to a more labile monophosphorylated state that can stimulate subsequent ribonuclease cleavage. In Mesorhizobium japonicum (strain LMG 29417 / CECT 9101 / MAFF 303099) (Mesorhizobium loti (strain MAFF 303099)), this protein is RNA pyrophosphohydrolase.